The following is a 176-amino-acid chain: Large ribosomal subunit protein eL20 (176 aa).

A Glycyl lysine isopeptide (Lys-Gly) (interchain with G-Cter in SUMO2) cross-link involves residue lysine 11. Position 63 is a phosphotyrosine (tyrosine 63). Phosphoserine is present on serine 71. Position 76 is an N6-succinyllysine (lysine 76). Residue serine 123 is modified to Phosphoserine. Glycyl lysine isopeptide (Lys-Gly) (interchain with G-Cter in SUMO2) cross-links involve residues lysine 128 and lysine 170.

This sequence belongs to the eukaryotic ribosomal protein eL20 family. Component of the large ribosomal subunit. Binds IPO9 with high affinity.

It is found in the cytoplasm. Component of the large ribosomal subunit. The ribosome is a large ribonucleoprotein complex responsible for the synthesis of proteins in the cell. The chain is Large ribosomal subunit protein eL20 (RPL18A) from Bos taurus (Bovine).